The sequence spans 198 residues: Suppressor of cytokine signaling 2 (198 aa).

The interval 1–75 is interaction with AREL1; the sequence is MTLRCLESSG…PEGTFLIRDS (75 aa). The interval 6–30 is disordered; that stretch reads LESSGNGAEGAQSQWGTAGSAEEPS. Residues 8–22 are compositionally biased toward polar residues; the sequence is SSGNGAEGAQSQWGT. Residues serine 30 and serine 52 each carry the phosphoserine modification. The SH2 domain maps to 48–156; that stretch reads WYWGSMTVNE…TVHLYLTKPL (109 aa). Residues 151-197 form the SOCS box domain; the sequence is YLTKPLYTSAPPLQHLCRLTINKCTSTVWGLPLPTRLKDYLEEYKFQ. Lysine 173 is covalently cross-linked (Glycyl lysine isopeptide (Lys-Gly) (interchain with G-Cter in ubiquitin)).

As to quaternary structure, substrate-recognition component of the ECS(SOCS2) complex, composed of SOCS2, CUL5, ELOB, ELOC and RNF7/RBX2. Interacts with IGF1R. Interacts with DCUN1D1. In terms of processing, ubiquitinated; mediated by AREL1 and leading to its subsequent proteasomal degradation. Ubiquitination is dependent on its phosphorylation at Ser-52, by PKC. Ubiquitination is stimulated by LPS. Phosphorylation at Ser-52 by PKC facilitates its ubiquitination and proteasomal degradation.

It localises to the cytoplasm. The protein operates within protein modification; protein ubiquitination. Its function is as follows. Substrate-recognition component of a cullin-5-RING E3 ubiquitin-protein ligase complex (ECS complex, also named CRL5 complex), which mediates the ubiquitination and subsequent proteasomal degradation of target proteins, such as EPOR and GHR. Specifically recognizes and binds phosphorylated proteins via its SH2 domain, promoting their ubiquitination. The ECS(SOCS2) complex acts as a key regulator of growth hormone receptor (GHR) levels by mediating ubiquitination and degradation of GHR, following GHR phosphorylation by JAK2. The ECS(SOCS2) also catalyzes ubiquitination and degradation of JAK2-phosphorylated EPOR. This Bos taurus (Bovine) protein is Suppressor of cytokine signaling 2 (SOCS2).